Consider the following 350-residue polypeptide: Phenylalanine--tRNA ligase alpha subunit (350 aa).

Glu-271 contacts Mg(2+).

The protein belongs to the class-II aminoacyl-tRNA synthetase family. Phe-tRNA synthetase alpha subunit type 1 subfamily. Tetramer of two alpha and two beta subunits. Mg(2+) serves as cofactor.

The protein localises to the cytoplasm. The enzyme catalyses tRNA(Phe) + L-phenylalanine + ATP = L-phenylalanyl-tRNA(Phe) + AMP + diphosphate + H(+). In Delftia acidovorans (strain DSM 14801 / SPH-1), this protein is Phenylalanine--tRNA ligase alpha subunit.